Here is a 137-residue protein sequence, read N- to C-terminus: Small ribosomal subunit protein uS12 (137 aa).

The interval 1 to 57 (MPTINQLVRKPRKSKVEKSKSPALNVGYNSRKKVQTNVSSPQKRGVATRVGTMTPKK) is disordered. The residue at position 102 (D102) is a 3-methylthioaspartic acid.

Belongs to the universal ribosomal protein uS12 family. In terms of assembly, part of the 30S ribosomal subunit. Contacts proteins S8 and S17. May interact with IF1 in the 30S initiation complex.

Functionally, with S4 and S5 plays an important role in translational accuracy. Interacts with and stabilizes bases of the 16S rRNA that are involved in tRNA selection in the A site and with the mRNA backbone. Located at the interface of the 30S and 50S subunits, it traverses the body of the 30S subunit contacting proteins on the other side and probably holding the rRNA structure together. The combined cluster of proteins S8, S12 and S17 appears to hold together the shoulder and platform of the 30S subunit. The chain is Small ribosomal subunit protein uS12 from Streptococcus suis (strain 98HAH33).